We begin with the raw amino-acid sequence, 302 residues long: Lysosomal thioesterase PPT2 (302 aa).

The first 27 residues, 1-27 (MPGLWRQRLPSAWALLLLPFLPLLMPA), serve as a signal peptide directing secretion. Asn60 is a glycosylation site (N-linked (GlcNAc...) asparagine). 2 disulfides stabilise this stretch: Cys109/Cys117 and Cys165/Cys176. Ser111 functions as the Nucleophile in the catalytic mechanism. N-linked (GlcNAc...) asparagine glycosylation is found at Asn190 and Asn206. Asp228 is an active-site residue. N-linked (GlcNAc...) asparagine glycosylation is present at Asn245. Cys276 and Cys296 form a disulfide bridge. His283 is an active-site residue. N-linked (GlcNAc...) asparagine glycosylation occurs at Asn289.

The protein belongs to the palmitoyl-protein thioesterase family. As to expression, expressed throughout the brain, primarily in neurons, and at lower levels in glial cells.

It is found in the lysosome. The catalysed reaction is hexadecanoyl-CoA + H2O = hexadecanoate + CoA + H(+). It catalyses the reaction S-hexadecanoyl-N-acetylcysteamine + H2O = N-acetylcysteamine + hexadecanoate + H(+). In terms of biological role, catalyzes the cleavage of thioester bonds from S-palmitoyl-CoA or S-palmitoyl-N-acetylcysteamine (unbranched structures) but does not have activity against palmitoylcysteine or palmitoylated proteins, branched structures or bulky head groups. Conversely, hydrolyzes both long and short chain fatty acyl-CoA substrate. The sequence is that of Lysosomal thioesterase PPT2 (Ppt2) from Mus musculus (Mouse).